A 421-amino-acid polypeptide reads, in one-letter code: Gamma-glutamyl phosphate reductase (421 aa).

The protein belongs to the gamma-glutamyl phosphate reductase family.

The protein localises to the cytoplasm. The catalysed reaction is L-glutamate 5-semialdehyde + phosphate + NADP(+) = L-glutamyl 5-phosphate + NADPH + H(+). Its pathway is amino-acid biosynthesis; L-proline biosynthesis; L-glutamate 5-semialdehyde from L-glutamate: step 2/2. Functionally, catalyzes the NADPH-dependent reduction of L-glutamate 5-phosphate into L-glutamate 5-semialdehyde and phosphate. The product spontaneously undergoes cyclization to form 1-pyrroline-5-carboxylate. This is Gamma-glutamyl phosphate reductase from Azotobacter vinelandii (strain DJ / ATCC BAA-1303).